The primary structure comprises 436 residues: Magnesium transporter MRS2-B (436 aa).

Low complexity-rich tracts occupy residues 1–14 (MSAA…GDSA) and 29–54 (VASV…FPGG). A disordered region spans residues 1–60 (MSAAAASSAAGDSAKQPLLHHQRGNPPHVASVSSPSLPSAPPGALAGGRRFPGGLDVPNL). Positions 176–242 (LALEAACSFL…RDEIEQLMDD (67 aa)) form a coiled coil. 2 consecutive transmembrane segments (helical) span residues 372–392 (LLLT…GIFG) and 408–428 (WVLI…LWFF). Residues 392-394 (GMN) carry the Required for magnesium transport activity motif.

The protein belongs to the CorA metal ion transporter (MIT) (TC 1.A.35.5) family.

The protein resides in the membrane. Functionally, magnesium transporter that may mediate the influx of magnesium. The protein is Magnesium transporter MRS2-B (MRS2-B) of Oryza sativa subsp. indica (Rice).